The sequence spans 965 residues: MNKKSKINKVMLSISTMALSLGALQAPASAEEKVPYNVLKTKPVGIEKPVDEIGHVSKAEETLSFQERLKVGDFSQRPASIPNKAAVKQVKESYSMADLNKMNDQELVETLGCIKWHQITDLFQFNEDAKAFYKDKGKMQVIIDELAHRGSTFTRDDSKGIQTFTEVLRSAFYLAFYNNELSELNERSFQDKCLPALKAIAKNPNFKLGTAEQDTVVSAYGKLISNASSDVETVQYASNILKQYNDNFNTYVNDRMKGQAIYDIMQGIDYDIQSYLIEARKEANETMWYGKVDGFINEINRIALLNEVTPENKWLVNNGIYFASRLGKFHSNPNKGLEVVTQAMHMYPRLSEPYFVAVEQITTNYNGKDYSGNTVDLEKIRKEGKEQYLPKTYTFDDGSIVFKTGDKVSEEKIKRLYWAAKEVKAQYHRVIGNDKALEPGNADDILTIVIYNSPEEYQLNRQLYGYETNNGGIYIEETGTFFTYERTPEQSIYSLEELFRHEFTHYLQGRYEVPGLFGRGDMYQNERLTWFQEGNAEFFAGSTRTNNVVPRKSIISGLSSDPASRYTAERTLFAKYGSWDFYNYSFALQSYLYTHQFETFDKIQDLIRANDVKNYDAYRENLSKDPKLNKEYQEYMQQLIDNQDKYNVPAVADDYLAEHAPKSLTAVEKEMTETLPMKDAKMTKHSSQFFNTFTLEGTYTGSVTKGESEDWNAMSKKVNEVLEQLAQKEWSGYKTVTAYFVNYRVNSSNEFEYDVVFHGIAKDDGENKAPTVNINGPYNGLVKEGIQFKSDGSKDEDGKIVSYLWDFGDGRTSTEVNPVHVYEREGSYKVALIVKDDKGKESKSETTVTVKDGSLTESEPNNRPEEANRIGLNTTIKGSLIGGDHTDVYTFNVASAKDIDISVLNEYGIGMTWVLHHESDMQNYAAYGQANGNHIEANFNAKPGEYYLYVYKYDNGDGTYKLSVK.

Residues 1-30 form the signal peptide; the sequence is MNKKSKINKVMLSISTMALSLGALQAPASA. Residues 31–93 constitute a propeptide that is removed on maturation; the sequence is EEKVPYNVLK…KAAVKQVKES (63 aa). Residues 94–366 form an activator domain region; the sequence is YSMADLNKMN…AVEQITTNYN (273 aa). The tract at residues 94 to 765 is S1 metalloprotease domain; the sequence is YSMADLNKMN…VFHGIAKDDG (672 aa). The tract at residues 376–645 is catalytic subdomain; sequence DLEKIRKEGK…MQQLIDNQDK (270 aa). Zn(2+) is bound at residue histidine 501. The active site involves glutamate 502. Residues histidine 505 and glutamate 533 each contribute to the Zn(2+) site. The segment at 653-765 is helper subdomain; sequence DDYLAEHAPK…VFHGIAKDDG (113 aa). One can recognise a PKD domain in the interval 769–850; it reads APTVNINGPY…ESKSETTVTV (82 aa). Positions 842-867 are disordered; that stretch reads SKSETTVTVKDGSLTESEPNNRPEEA. Positions 845–859 are enriched in polar residues; sequence ETTVTVKDGSLTESE. Residues 853–965 are collagen-binding domain; sequence GSLTESEPNN…GDGTYKLSVK (113 aa).

Belongs to the peptidase M9B family. Collagenase subfamily. Requires Ca(2+) as cofactor. Zn(2+) is required as a cofactor.

It localises to the secreted. It catalyses the reaction Digestion of native collagen in the triple helical region at Xaa-|-Gly bonds. With synthetic peptides, a preference is shown for Gly at P3 and P1', Pro and Ala at P2 and P2', and hydroxyproline, Ala or Arg at P3'.. Its activity is regulated as follows. Strongly inhibited by EDTA. Not inhibited by E-64 and PMSF, broad-spectrum cysteine and serine protease inhibitors. Functionally, acts as a true collagenase, which is highly active and cleaves natively folded collagen. In vitro, can also cleave gelatin and the synthetic peptide FALGPA (furylacryloyl-Leu-Gly-Pro-Ala). Causes damage on dermal collagen (COL), resulting in gaps in the tissue, which might lead to an accelerated bacterial infiltration and penetration into deeper sites of the host. This Bacillus cereus (strain Q1) protein is Collagenase ColQ1.